The chain runs to 183 residues: Protein Syd (183 aa).

The protein belongs to the Syd family.

It is found in the cell inner membrane. Its function is as follows. Interacts with the SecY protein in vivo. May bind preferentially to an uncomplexed state of SecY, thus functioning either as a chelating agent for excess SecY in the cell or as a regulatory factor that negatively controls the translocase function. The polypeptide is Protein Syd (Aliivibrio fischeri (strain ATCC 700601 / ES114) (Vibrio fischeri)).